A 225-amino-acid polypeptide reads, in one-letter code: MEKVLKNDWGPLLAPEFEKEYYRKLADFLKEEYSTHVVYPKKEDIFNALEYTSYENTKVVILGQDPYHGPNQAHGLSFSVQPGIKTPPSLLNMYKELRDEYGYDIPNNGYLVKWAEQGVLLLNTVLTVRQGEANSHKGKGWEHFTDRVIELLNEREKPVIFILWGRHAQAKKKLITNTKHHIIESVHPSPLSARRGFFGSKPYSKVNTILANMGEREIDWEIPNL.

The active-site Proton acceptor is the D65.

The protein belongs to the uracil-DNA glycosylase (UDG) superfamily. UNG family.

The protein localises to the cytoplasm. It catalyses the reaction Hydrolyzes single-stranded DNA or mismatched double-stranded DNA and polynucleotides, releasing free uracil.. Excises uracil residues from the DNA which can arise as a result of misincorporation of dUMP residues by DNA polymerase or due to deamination of cytosine. This is Uracil-DNA glycosylase from Bacillus cereus (strain ZK / E33L).